The sequence spans 535 residues: Sucrose transport protein SUT5 (535 aa).

The Cytoplasmic segment spans residues 1 to 53 (MEEGRRGDREGKSAAGWTALSTTKTTLEEKRRLQANGSVGGDAGTSGFRRIVR). The chain crosses the membrane as a helical span at residues 54-74 (LFFACMVAGGIQYGWALQLSL). The Extracellular portion of the chain corresponds to 75–87 (LSPYSQTLGISHS). A helical transmembrane segment spans residues 88–108 (YVSLTWICGPIAGFVVQPIVG). At 109–122 (YYSDRCTMKMGRRR) the chain is on the cytoplasmic side. Residues 123 to 143 (PFILVGCLIICISVMIIGFSA) form a helical membrane-spanning segment. The Extracellular portion of the chain corresponds to 144–163 (DIGRHLGDTKEHCSTYTGPR). A helical transmembrane segment spans residues 164–184 (WSAAMVYIVGFWFLDFANNTV). Residues 185–203 (QGPARAMMADLSAGHHGPN) lie on the Cytoplasmic side of the membrane. Residues 204 to 224 (VGQSIFSLWMAIGSVLGYLSG) traverse the membrane as a helical segment. At 225-249 (ANGKWHEWFPWLKTAACCDACANLK) the chain is on the extracellular side. The chain crosses the membrane as a helical span at residues 250 to 270 (GAFFTAVLLIVVSMTVTMYLA). At 271 to 302 (DEMPLDKQDVDTSGGGGCAVFVDLFKSLRNLP) the chain is on the cytoplasmic side. A helical transmembrane segment spans residues 303–323 (PAMFKVLAVTAVTWLSWFPFI). Over 324-354 (QYNTDWMGREIYHGEPQGTAAKADVYDAGVR) the chain is Extracellular. A helical transmembrane segment spans residues 355–375 (EGAMGLLFCSVALGVTSFVIP). Topologically, residues 376–384 (KLCRRLTSK) are cytoplasmic. Residues 385–405 (VVWSISNFLVFALMAVMVAVG) form a helical membrane-spanning segment. Topologically, residues 406 to 429 (MVSMRGYRPSLAAGLTGPDPTLKA) are extracellular. A helical membrane pass occupies residues 430-450 (VALVVFALIGIPQAVLFSVPW). Residues 451-465 (AVASEVTAEEGGGQG) lie on the Cytoplasmic side of the membrane. The helical transmembrane segment at 466 to 486 (LAIGVLNIAIVVPQLVIALTA) threads the bilayer. Topologically, residues 487–498 (GPIDGAFNKGNT) are extracellular. Residues 499–519 (PAFGIGGAFAFICGVLALIWL) traverse the membrane as a helical segment. Residues 520–535 (PKTRGVSNAAVVAGGH) are Cytoplasmic-facing.

The protein belongs to the glycoside-pentoside-hexuronide (GPH) cation symporter transporter (TC 2.A.2.4) family. As to quaternary structure, homodimer. As to expression, widely expressed. Highest expression in sink leaves and lowest in germinating seeds.

Its subcellular location is the cell membrane. Its pathway is glycan biosynthesis; sucrose metabolism. Its function is as follows. Responsible for the transport of sucrose into the cell, with the concomitant uptake of protons (symport system). Can also transport other glucosides such as maltose, arbutin, salicin, helicin, alpha-phenylglucoside and beta-phenylglucoside. In Oryza sativa subsp. japonica (Rice), this protein is Sucrose transport protein SUT5 (SUT5).